Here is a 226-residue protein sequence, read N- to C-terminus: V-type proton ATPase subunit E 2 (226 aa).

Belongs to the V-ATPase E subunit family. V-ATPase is a heteromultimeric enzyme made up of two complexes: the ATP-hydrolytic V1 complex and the proton translocation V0 complex. The V1 complex consists of three catalytic AB heterodimers that form a heterohexamer, three peripheral stalks each consisting of EG heterodimers, one central rotor including subunits D and F, and the regulatory subunits C and H. The proton translocation complex V0 consists of the proton transport subunit a, a ring of proteolipid subunits c9c'', rotary subunit d, subunits e and f, and the accessory subunits ATP6AP1/Ac45 and ATP6AP2/PRR.

Functionally, subunit of the V1 complex of vacuolar(H+)-ATPase (V-ATPase), a multisubunit enzyme composed of a peripheral complex (V1) that hydrolyzes ATP and a membrane integral complex (V0) that translocates protons. V-ATPase is responsible for acidifying and maintaining the pH of intracellular compartments and in some cell types, is targeted to the plasma membrane, where it is responsible for acidifying the extracellular environment. In Bos taurus (Bovine), this protein is V-type proton ATPase subunit E 2 (ATP6V1E2).